Reading from the N-terminus, the 367-residue chain is MAAVITWALALLSVFATVQARKSFWEYFGQNSQGKGMMGQQQKLAQESLKGSLEQDLYNMNNFLEKLGPLREPGKEPPRLAQDPEGIRKQLQQELEEVSTRLEPYMAAKHQQVGWNLEGLRQQLKPYTVELMEQVGLSVQDLQEQLRMVGKGTKAQLLGGVDEAMSLLQDMQSRVLHHTDRVKELFHPYAERLVTGIGHHVQELHRSVAPHAVASPARLSRCVQTLSHKLTRKAKDLHTSIQRNLDQLRDELSTFIRVSTDGADNRDSLDPQALSDEVRQRLQAFRHDTYLQIAAFTQAIDQETEEIQHQLAPPPPSHSAFAPELGHSDSNKALSRLQSRLDDLWEDIAYGLHDQGHSQNNPEGHSG.

The first 20 residues, 1–20 (MAAVITWALALLSVFATVQA), serve as a signal peptide directing secretion. Ser-52 carries the post-translational modification Phosphoserine. Positions 231–255 (TRKAKDLHTSIQRNLDQLRDELSTF) form a coiled coil. The interval 305-332 (EEIQHQLAPPPPSHSAFAPELGHSDSNK) is disordered.

Belongs to the apolipoprotein A1/A4/E family. In terms of assembly, interacts with GPIHBP1. Interacts with SORL1; this interaction leads to APOA5 internalization and sorting either to lysosomes and degradation, or to the trans-Golgi network. In terms of processing, phosphorylated by FAM20C in the extracellular medium. As to expression, liver.

The protein localises to the secreted. The protein resides in the early endosome. It localises to the late endosome. Its subcellular location is the golgi apparatus. It is found in the trans-Golgi network. Its function is as follows. Minor apolipoprotein mainly associated with HDL and to a lesser extent with VLDL. May also be associated with chylomicrons. Important determinant of plasma triglyceride (TG) levels by both being a potent stimulator of apo-CII lipoprotein lipase (LPL) TG hydrolysis and an inhibitor of the hepatic VLDL-TG production rate (without affecting the VLDL-apoB production rate). Activates poorly lecithin:cholesterol acyltransferase (LCAT) and does not enhance efflux of cholesterol from macrophages. Binds heparin. This Rattus norvegicus (Rat) protein is Apolipoprotein A-V (Apoa5).